The primary structure comprises 162 residues: uncharacterized protein (162 aa).

Positions 78-154 (KNLVVVDIGA…KAIKNLHYVG (77 aa)) constitute a PUA domain.

This is an uncharacterized protein from Methanocaldococcus jannaschii (strain ATCC 43067 / DSM 2661 / JAL-1 / JCM 10045 / NBRC 100440) (Methanococcus jannaschii).